The primary structure comprises 440 residues: 3-phosphoshikimate 1-carboxyvinyltransferase (440 aa).

Positions 26, 27, and 31 each coordinate 3-phosphoshikimate. Lysine 26 lines the phosphoenolpyruvate pocket. Residues glycine 99 and arginine 127 each contribute to the phosphoenolpyruvate site. Residues serine 172, glutamine 174, aspartate 320, and lysine 347 each contribute to the 3-phosphoshikimate site. Glutamine 174 serves as a coordination point for phosphoenolpyruvate. The active-site Proton acceptor is the aspartate 320. Arginine 351 and arginine 392 together coordinate phosphoenolpyruvate.

This sequence belongs to the EPSP synthase family. Monomer.

It localises to the cytoplasm. It catalyses the reaction 3-phosphoshikimate + phosphoenolpyruvate = 5-O-(1-carboxyvinyl)-3-phosphoshikimate + phosphate. The protein operates within metabolic intermediate biosynthesis; chorismate biosynthesis; chorismate from D-erythrose 4-phosphate and phosphoenolpyruvate: step 6/7. Its function is as follows. Catalyzes the transfer of the enolpyruvyl moiety of phosphoenolpyruvate (PEP) to the 5-hydroxyl of shikimate-3-phosphate (S3P) to produce enolpyruvyl shikimate-3-phosphate and inorganic phosphate. The polypeptide is 3-phosphoshikimate 1-carboxyvinyltransferase (Xanthomonas euvesicatoria pv. vesicatoria (strain 85-10) (Xanthomonas campestris pv. vesicatoria)).